The sequence spans 162 residues: Shikimate kinase (162 aa).

11–16 (GSGKSS) is an ATP binding site. Residue serine 15 participates in Mg(2+) binding. Residues aspartate 33, arginine 57, and glycine 80 each coordinate substrate. Positions 109-123 (NQKEREKRPLLNNLT) are LID domain. Arginine 116 contacts ATP. Arginine 132 is a binding site for substrate.

Belongs to the shikimate kinase family. As to quaternary structure, monomer. Mg(2+) serves as cofactor.

The protein localises to the cytoplasm. It carries out the reaction shikimate + ATP = 3-phosphoshikimate + ADP + H(+). It functions in the pathway metabolic intermediate biosynthesis; chorismate biosynthesis; chorismate from D-erythrose 4-phosphate and phosphoenolpyruvate: step 5/7. In terms of biological role, catalyzes the specific phosphorylation of the 3-hydroxyl group of shikimic acid using ATP as a cosubstrate. The sequence is that of Shikimate kinase (aroK) from Helicobacter pylori (strain ATCC 700392 / 26695) (Campylobacter pylori).